The primary structure comprises 346 residues: MLVLGIESSCDETGLALYDTQRGLLAHALHSQIAMHRDYGGVVPELASRDHIRRALPLLEEVIAKSGARREDIDAIAFTQGPGLAGALLVGASIANALALAWNKPTVGIHHLEGHLLSPLLVAEPPPFPFVALLVSGGHTQLMRVTDVGVYETLGETLDDAAGEAFDKTAKLIGLGYPGGPEVSKLAETGTPGAVVLPRPMLHSGDLDFSFSGLKTAVLTQMKKFEAAQLSGDALARAKADLARGFVDAAVDVLVAKSLAALKKTKLKRLVVAGGVGANRQLRAALSAAAAKRGFDVHYPDLALCTDNGAMIALAGALRLARWPEQANVDYAFTVKPRWDLASLAR.

Residues His111 and His115 each contribute to the Fe cation site. Residues 134–138 (LVSGG), Asp167, Gly180, and Asn279 contribute to the substrate site. Residue Asp307 coordinates Fe cation.

The protein belongs to the KAE1 / TsaD family. Fe(2+) is required as a cofactor.

It is found in the cytoplasm. The enzyme catalyses L-threonylcarbamoyladenylate + adenosine(37) in tRNA = N(6)-L-threonylcarbamoyladenosine(37) in tRNA + AMP + H(+). Required for the formation of a threonylcarbamoyl group on adenosine at position 37 (t(6)A37) in tRNAs that read codons beginning with adenine. Is involved in the transfer of the threonylcarbamoyl moiety of threonylcarbamoyl-AMP (TC-AMP) to the N6 group of A37, together with TsaE and TsaB. TsaD likely plays a direct catalytic role in this reaction. In Burkholderia multivorans (strain ATCC 17616 / 249), this protein is tRNA N6-adenosine threonylcarbamoyltransferase.